The chain runs to 534 residues: Inorganic phosphate transporter 1-6 (534 aa).

Residues 1–29 (MGGGGGEQQQLEVLHALDVAKTQWYHFTA) are Cytoplasmic-facing. A helical membrane pass occupies residues 30–50 (IVVAGMGFFTDAYDLFCISLV). The Extracellular portion of the chain corresponds to 51-75 (TKLLGRIYYRVDGSPSPGTLPPHVS). Residues 76-96 (ASVNGVAFVGTLSGQLFFGWL) form a helical membrane-spanning segment. The Cytoplasmic segment spans residues 97–104 (GDKLGRKR). A helical membrane pass occupies residues 105 to 125 (VYGITLMLMVLCSLASALSFG). Residues 126 to 127 (HT) lie on the Extracellular side of the membrane. A helical transmembrane segment spans residues 128–148 (PTSVMATLCFFRFWLGFGIGG). Over 149–168 (DYPLSATIMSEYANKKTRGA) the chain is Cytoplasmic. Residues 169-189 (FIAAVFAMQGFGIITGGLVAI) traverse the membrane as a helical segment. Over 190-216 (LVSASFRAAFPAPPYGEDPVASTPPQA) the chain is Extracellular. Residues 217–237 (DFVWRIILMLGALPAALTYYW) form a helical membrane-spanning segment. Residues 238-294 (RTKMPETARYTALVANNAKQAAADMSKVLQVVEMRNIGNNGGSRRPFGLFSGEFVRR) are Cytoplasmic-facing. A helical transmembrane segment spans residues 295–315 (HGLHLVGTSATWLLLDIAFYS). Residues 316–350 (QNLFQKDIFSAVGWIPKAATMSALEELFRIARAQT) are Extracellular-facing. The helical transmembrane segment at 351–371 (LIALCGTVPGYWFTVALIDVV) threads the bilayer. Over 372 to 375 (GRFK) the chain is Cytoplasmic. A helical transmembrane segment spans residues 376–396 (IQAVGFFMMTLFMLTLALPYH). The Extracellular portion of the chain corresponds to 397–405 (HWTAPGKNH). Residues 406 to 426 (VGFLLLYGLTFFFANFGPNST) traverse the membrane as a helical segment. Over 427–445 (TFIVPAEIFPARLRATCHG) the chain is Cytoplasmic. A helical transmembrane segment spans residues 446–466 (ISAASGKLGAIVGSFGFLYLA). The Extracellular portion of the chain corresponds to 467-486 (QSPDRSKTEHGYPPGIGVRN). Residues 487–507 (SLFLLAACNLLGLLFTFLVPE) form a helical membrane-spanning segment. Over 508-534 (SKGKSLEEMSGDAEAQEEAPPPLQTVL) the chain is Cytoplasmic. Residues 514 to 534 (EEMSGDAEAQEEAPPPLQTVL) are disordered.

Belongs to the major facilitator superfamily. Phosphate:H(+) symporter (TC 2.A.1.9) family. As to expression, highly expressed in leaves and at low levels in roots. Expressed in leaf xylem parenchyma cells.

The protein resides in the membrane. High-affinity transporter for external inorganic phosphate (Pi). Probably involved in Pi uptake, translocation and internal transport throughout the plant. The chain is Inorganic phosphate transporter 1-6 (PHT1-6) from Oryza sativa subsp. japonica (Rice).